We begin with the raw amino-acid sequence, 168 residues long: Leukotoxin-activating lysine-acyltransferase LtxC (168 aa).

Residues histidine 23 and aspartate 92 contribute to the active site.

Belongs to the RTX toxin acyltransferase family.

The protein resides in the cytoplasm. The catalysed reaction is a fatty acyl-[ACP] + L-lysyl-[protein] = N(6)-(fatty acyl)-L-lysyl-[protein] + holo-[ACP] + H(+). Its function is as follows. Required for full activity and modification of the LtxA leukotoxin. Involved in fatty acid modification of the protoxin at two internal lysine residues, thereby converting it to the active toxin. The chain is Leukotoxin-activating lysine-acyltransferase LtxC from Aggregatibacter actinomycetemcomitans (Actinobacillus actinomycetemcomitans).